Reading from the N-terminus, the 401-residue chain is Enolase (401 aa).

A (2R)-2-phosphoglycerate-binding site is contributed by glutamine 154. Residue glutamate 196 is the Proton donor of the active site. Positions 232, 275, and 302 each coordinate Mg(2+). (2R)-2-phosphoglycerate contacts are provided by lysine 327, arginine 356, serine 357, and lysine 378. The active-site Proton acceptor is lysine 327.

It belongs to the enolase family. It depends on Mg(2+) as a cofactor.

The protein localises to the cytoplasm. Its subcellular location is the secreted. It localises to the cell surface. It carries out the reaction (2R)-2-phosphoglycerate = phosphoenolpyruvate + H2O. It functions in the pathway carbohydrate degradation; glycolysis; pyruvate from D-glyceraldehyde 3-phosphate: step 4/5. Its function is as follows. Catalyzes the reversible conversion of 2-phosphoglycerate (2-PG) into phosphoenolpyruvate (PEP). It is essential for the degradation of carbohydrates via glycolysis. In Haloarcula marismortui (strain ATCC 43049 / DSM 3752 / JCM 8966 / VKM B-1809) (Halobacterium marismortui), this protein is Enolase.